Here is a 255-residue protein sequence, read N- to C-terminus: Acetylglutamate kinase (255 aa).

Substrate contacts are provided by residues 40–41 (GG), R62, and N153.

This sequence belongs to the acetylglutamate kinase family. ArgB subfamily.

The protein resides in the cytoplasm. The catalysed reaction is N-acetyl-L-glutamate + ATP = N-acetyl-L-glutamyl 5-phosphate + ADP. The protein operates within amino-acid biosynthesis; L-arginine biosynthesis; N(2)-acetyl-L-ornithine from L-glutamate: step 2/4. Functionally, catalyzes the ATP-dependent phosphorylation of N-acetyl-L-glutamate. This Bacillus cereus (strain B4264) protein is Acetylglutamate kinase.